We begin with the raw amino-acid sequence, 408 residues long: tRNA-specific 2-thiouridylase MnmA (408 aa).

ATP is bound by residues 38–45 and Met64; that span reads GMSGGVDS. The tract at residues 124-126 is interaction with target base in tRNA; sequence NPD. The active-site Nucleophile is the Cys129. Cys129 and Cys231 form a disulfide bridge. Gly153 is an ATP binding site. The interaction with tRNA stretch occupies residues 181-183; that stretch reads KDQ. Cys231 (cysteine persulfide intermediate) is an active-site residue. Residues 348 to 349 form an interaction with tRNA region; sequence RY.

The protein belongs to the MnmA/TRMU family.

It is found in the cytoplasm. It catalyses the reaction S-sulfanyl-L-cysteinyl-[protein] + uridine(34) in tRNA + AH2 + ATP = 2-thiouridine(34) in tRNA + L-cysteinyl-[protein] + A + AMP + diphosphate + H(+). In terms of biological role, catalyzes the 2-thiolation of uridine at the wobble position (U34) of tRNA, leading to the formation of s(2)U34. The protein is tRNA-specific 2-thiouridylase MnmA of Psychrobacter cryohalolentis (strain ATCC BAA-1226 / DSM 17306 / VKM B-2378 / K5).